The following is a 193-amino-acid chain: Holliday junction branch migration complex subunit RuvA (193 aa).

Positions 1–64 (MIGRIAGTLI…EDAHLLYGFG (64 aa)) are domain I. The interval 65–143 (SAAERNTFRE…AELGHAPGAA (79 aa)) is domain II. The interval 144–151 (PVHDSAVD) is flexible linker. Positions 151–193 (DILNALLALGYSEKEAATAIKQVPAGTGVSDGIKLALKALSKA) are domain III.

It belongs to the RuvA family. In terms of assembly, homotetramer. Forms an RuvA(8)-RuvB(12)-Holliday junction (HJ) complex. HJ DNA is sandwiched between 2 RuvA tetramers; dsDNA enters through RuvA and exits via RuvB. An RuvB hexamer assembles on each DNA strand where it exits the tetramer. Each RuvB hexamer is contacted by two RuvA subunits (via domain III) on 2 adjacent RuvB subunits; this complex drives branch migration. In the full resolvosome a probable DNA-RuvA(4)-RuvB(12)-RuvC(2) complex forms which resolves the HJ.

The protein localises to the cytoplasm. In terms of biological role, the RuvA-RuvB-RuvC complex processes Holliday junction (HJ) DNA during genetic recombination and DNA repair, while the RuvA-RuvB complex plays an important role in the rescue of blocked DNA replication forks via replication fork reversal (RFR). RuvA specifically binds to HJ cruciform DNA, conferring on it an open structure. The RuvB hexamer acts as an ATP-dependent pump, pulling dsDNA into and through the RuvAB complex. HJ branch migration allows RuvC to scan DNA until it finds its consensus sequence, where it cleaves and resolves the cruciform DNA. The protein is Holliday junction branch migration complex subunit RuvA of Cupriavidus pinatubonensis (strain JMP 134 / LMG 1197) (Cupriavidus necator (strain JMP 134)).